Reading from the N-terminus, the 33-residue chain is Brevinin-2PTb (33 aa).

Cys27 and Cys33 are oxidised to a cystine.

Expressed by the skin glands.

The protein resides in the secreted. Its function is as follows. Has antibacterial activity against the Gram-positive bacterium S.aureus ATCC 25923 (MIC=9 uM) and the Gram-negative bacterium E.coli ATCC 25726 (MIC=9 uM). In Pulchrana picturata (Malaysian fire frog), this protein is Brevinin-2PTb.